The following is a 630-amino-acid chain: Coiled-coil domain-containing protein 120 (630 aa).

An involved in CYTH2-binding region spans residues 31-70; sequence RLRGLLDRQRTLQEALSLKLQELRKVCLQEAELTGQLPPE. Positions 109-173 form a coiled coil; sequence ELALEALERE…LRDVRARLGL (65 aa). Composition is skewed to low complexity over residues 212–222 and 282–297; these read HSESSSLSESG and ASPT…SASS. Disordered regions lie at residues 212–435 and 457–534; these read HSES…GAPR and GGGT…NPLL. Residues 326–335 show a composition bias toward polar residues; it reads RQWSGSQDSQ. S358 and S360 each carry phosphoserine. Over residues 421 to 434 the composition is skewed to low complexity; it reads ARPSSAAPASRGAP. R435 bears the Omega-N-methylarginine mark.

In terms of assembly, interacts with NIN and CEP170; leading to recruit them to centrosomes. Directly interacts with CYTH2; this interaction stabilizes CCDC120, possibly by preventing ubiquitination. In terms of processing, ubiquitinated; interaction with CYTH2 may prevent ubiquitination.

It is found in the cytoplasm. Its subcellular location is the cytoskeleton. It localises to the microtubule organizing center. The protein localises to the centrosome. The protein resides in the centriole. It is found in the cell projection. Its subcellular location is the neuron projection. It localises to the growth cone. The protein localises to the endosome. In terms of biological role, centriolar protein required for centriole subdistal appendage assembly and microtubule anchoring in interphase cells. Together with CCDC68, cooperate with subdistal appendage components ODF2, NIN and CEP170 for hierarchical subdistal appendage assembly. Recruits NIN and CEP170 to centrosomes. Also required for neurite growth. Localizes CYTH2 to vesicles to allow its transport along neurites, and subsequent ARF6 activation and neurite growth. The protein is Coiled-coil domain-containing protein 120 (CCDC120) of Homo sapiens (Human).